A 435-amino-acid chain; its full sequence is Glutamate-1-semialdehyde 2,1-aminomutase (435 aa).

An N6-(pyridoxal phosphate)lysine modification is found at K266.

This sequence belongs to the class-III pyridoxal-phosphate-dependent aminotransferase family. HemL subfamily. As to quaternary structure, homodimer. Pyridoxal 5'-phosphate is required as a cofactor.

It is found in the cytoplasm. It catalyses the reaction (S)-4-amino-5-oxopentanoate = 5-aminolevulinate. The protein operates within porphyrin-containing compound metabolism; protoporphyrin-IX biosynthesis; 5-aminolevulinate from L-glutamyl-tRNA(Glu): step 2/2. In Nitrosomonas europaea (strain ATCC 19718 / CIP 103999 / KCTC 2705 / NBRC 14298), this protein is Glutamate-1-semialdehyde 2,1-aminomutase.